Consider the following 419-residue polypeptide: uncharacterized protein (419 aa).

11 consecutive transmembrane segments (helical) span residues 1–21, 24–44, 66–86, 101–121, 174–194, 216–236, 242–262, 280–300, 311–331, 349–369, and 396–416; these read MTTV…FLIL, VSPA…GGAD, ILAA…NSIT, ALAL…VAVI, SVMM…YFLA, NLPS…LLAL, IKVD…FCMG, PVAI…NSGL, SGLP…LATA, LELG…ATVF, and IPYE…IFGV.

It belongs to the CitM (TC 2.A.11) transporter family.

Its subcellular location is the cell membrane. This is an uncharacterized protein from Haemophilus influenzae (strain ATCC 51907 / DSM 11121 / KW20 / Rd).